A 231-amino-acid polypeptide reads, in one-letter code: Large ribosomal subunit protein uL1 (231 aa).

This sequence belongs to the universal ribosomal protein uL1 family. As to quaternary structure, part of the 50S ribosomal subunit.

Functionally, binds directly to 23S rRNA. The L1 stalk is quite mobile in the ribosome, and is involved in E site tRNA release. Its function is as follows. Protein L1 is also a translational repressor protein, it controls the translation of the L11 operon by binding to its mRNA. This chain is Large ribosomal subunit protein uL1, found in Francisella tularensis subsp. tularensis (strain FSC 198).